Here is a 334-residue protein sequence, read N- to C-terminus: Phosphoribosylformylglycinamidine cyclo-ligase (334 aa).

It belongs to the AIR synthase family.

It localises to the cytoplasm. It catalyses the reaction 2-formamido-N(1)-(5-O-phospho-beta-D-ribosyl)acetamidine + ATP = 5-amino-1-(5-phospho-beta-D-ribosyl)imidazole + ADP + phosphate + H(+). Its pathway is purine metabolism; IMP biosynthesis via de novo pathway; 5-amino-1-(5-phospho-D-ribosyl)imidazole from N(2)-formyl-N(1)-(5-phospho-D-ribosyl)glycinamide: step 2/2. The sequence is that of Phosphoribosylformylglycinamidine cyclo-ligase from Pyrococcus horikoshii (strain ATCC 700860 / DSM 12428 / JCM 9974 / NBRC 100139 / OT-3).